Here is a 266-residue protein sequence, read N- to C-terminus: Putative zinc finger protein 034R (266 aa).

The segment at 84–176 (SPTKSVDKAA…GPKRDSTQQP (93 aa)) is disordered. Residues 88–100 (SVDKAAQKEKKMP) are compositionally biased toward basic and acidic residues. Composition is skewed to polar residues over residues 105 to 119 (KPTTVTPTRNEQGIL) and 160 to 176 (GVSQQQQGPKRDSTQQP). A C3H1-type zinc finger spans residues 180 to 192 (CKSVLKQAKCYFG).

This sequence belongs to the IIV-6 077L family.

The polypeptide is Putative zinc finger protein 034R (Aedes vexans (Inland floodwater mosquito)).